A 200-amino-acid polypeptide reads, in one-letter code: Holliday junction resolvase RecU (200 aa).

Positions 85, 87, 100, and 119 each coordinate Mg(2+).

It belongs to the RecU family. The cofactor is Mg(2+).

The protein localises to the cytoplasm. The catalysed reaction is Endonucleolytic cleavage at a junction such as a reciprocal single-stranded crossover between two homologous DNA duplexes (Holliday junction).. Endonuclease that resolves Holliday junction intermediates in genetic recombination. Cleaves mobile four-strand junctions by introducing symmetrical nicks in paired strands. Promotes annealing of linear ssDNA with homologous dsDNA. Required for DNA repair, homologous recombination and chromosome segregation. This is Holliday junction resolvase RecU from Bacillus cytotoxicus (strain DSM 22905 / CIP 110041 / 391-98 / NVH 391-98).